Here is a 613-residue protein sequence, read N- to C-terminus: Tetratricopeptide repeat protein 39A (613 aa).

TPR repeat units follow at residues 315 to 348, 505 to 538, and 546 to 579; these read AIFL…QQHW, CLVK…EKKI, and PNAL…YKNY.

Belongs to the TTC39 family.

The polypeptide is Tetratricopeptide repeat protein 39A (TTC39A) (Homo sapiens (Human)).